The chain runs to 155 residues: Small ribosomal subunit protein uS7c (155 aa).

It belongs to the universal ribosomal protein uS7 family. Part of the 30S ribosomal subunit.

It is found in the plastid. The protein localises to the chloroplast. One of the primary rRNA binding proteins, it binds directly to 16S rRNA where it nucleates assembly of the head domain of the 30S subunit. This Cornus mas (Cornelian cherry dogwood) protein is Small ribosomal subunit protein uS7c (rps7).